An 83-amino-acid chain; its full sequence is EMBRYO SURROUNDING FACTOR 1.1 (83 aa).

A signal peptide spans 1–22 (MKSSHTSLICILMLSLVALHQC). 4 disulfide bridges follow: Cys41–Cys56, Cys46–Cys75, Cys54–Cys71, and Cys57–Cys64.

It belongs to the MEG family. Expressed exclusively in ovule embryo sacs and in early developing endosperms.

Maternally-contributed central cell peptide regulating suspensor development and correct auxin distribution in early developing embryos. The protein is EMBRYO SURROUNDING FACTOR 1.1 (ESF1.1) of Arabidopsis thaliana (Mouse-ear cress).